A 191-amino-acid chain; its full sequence is Outer membrane lipoprotein DolP (191 aa).

Residues 1-18 (MKAFSPLAVLISALLLQG) form the signal peptide. Cys-19 carries the N-palmitoyl cysteine lipid modification. Cys-19 is lipidated: S-diacylglycerol cysteine. 2 consecutive BON domains span residues 46 to 115 (DDGT…RQGQ) and 124 to 191 (NDTW…TYIK).

It belongs to the lipoprotein DolP family.

Its subcellular location is the cell outer membrane. Plays an important role in maintaining outer membrane integrity. Contributes to virulence. This is Outer membrane lipoprotein DolP from Salmonella typhimurium (strain LT2 / SGSC1412 / ATCC 700720).